Here is a 114-residue protein sequence, read N- to C-terminus: Putative membrane protein insertion efficiency factor (114 aa).

It belongs to the UPF0161 family.

It is found in the cell inner membrane. In terms of biological role, could be involved in insertion of integral membrane proteins into the membrane. The polypeptide is Putative membrane protein insertion efficiency factor (Nitrobacter hamburgensis (strain DSM 10229 / NCIMB 13809 / X14)).